The sequence spans 457 residues: Flavohemoprotein-2 (457 aa).

A Globin domain is found at 2–157 (ALSEDTIKAV…LADLLIKREE (156 aa)). Position 106 (His106) interacts with heme b. Active-site charge relay system residues include Tyr116 and Glu156. A reductase region spans residues 168-456 (GGWRQTRTFR…FEMFGPFKAS (289 aa)). The FAD-binding FR-type domain maps to 171–278 (RQTRTFRVEE…APPYGDFFLR (108 aa)). Residues Tyr210 and 227 to 230 (RQYS) contribute to the FAD site. 320-325 (GIGQTP) is a binding site for NADP(+). 449–452 (MFGP) serves as a coordination point for FAD.

It belongs to the globin family. Two-domain flavohemoproteins subfamily. In the C-terminal section; belongs to the flavoprotein pyridine nucleotide cytochrome reductase family. Monomer. Heme b is required as a cofactor. Requires FAD as cofactor.

The catalysed reaction is 2 nitric oxide + NADPH + 2 O2 = 2 nitrate + NADP(+) + H(+). The enzyme catalyses 2 nitric oxide + NADH + 2 O2 = 2 nitrate + NAD(+) + H(+). Its function is as follows. Flavohemoprotein involved in nitric oxide (NO) detoxification in an aerobic process, termed nitric oxide dioxygenase (NOD) reaction that utilizes O(2) and NAD(P)H to convert NO to nitrate, which protects the protozoan parasite from various noxious nitrogen compounds. Therefore, plays a central role in the inducible response to nitrosative stress. May also be involved in O(2) detoxification. The sequence is that of Flavohemoprotein-2 (hmpA-2) from Giardia intestinalis (strain P15) (Giardia lamblia).